The following is a 165-amino-acid chain: Small ribosomal subunit protein uS5 (165 aa).

An S5 DRBM domain is found at 10-73; sequence LNEKLIAVNR…EKARRNMVTV (64 aa).

The protein belongs to the universal ribosomal protein uS5 family. As to quaternary structure, part of the 30S ribosomal subunit. Contacts proteins S4 and S8.

Its function is as follows. With S4 and S12 plays an important role in translational accuracy. Functionally, located at the back of the 30S subunit body where it stabilizes the conformation of the head with respect to the body. In Photobacterium profundum (strain SS9), this protein is Small ribosomal subunit protein uS5.